A 290-amino-acid polypeptide reads, in one-letter code: Nucleoid occlusion protein (290 aa).

Positions 153–172 form a DNA-binding region, H-T-H motif; that stretch reads EALAQRLGKGQSTVANKLRL.

This sequence belongs to the ParB family.

The protein resides in the cytoplasm. It localises to the nucleoid. In terms of biological role, effects nucleoid occlusion by binding relatively nonspecifically to DNA and preventing the assembly of the division machinery in the vicinity of the nucleoid, especially under conditions that disturb the cell cycle. It helps to coordinate cell division and chromosome segregation by preventing the formation of the Z ring through the nucleoid, which would cause chromosome breakage. This chain is Nucleoid occlusion protein, found in Bacillus mycoides (strain KBAB4) (Bacillus weihenstephanensis).